The sequence spans 178 residues: MMTSEKDTEQNEELNEKQKPPVSMAGRVAATGFCGGVLWSFVAYIAYLFHFSEISPNMILQPFVLGEWKKHGLGTVISIILIGVISIGAAFLYFLLLKRLKTMWPGILYGLVLWLLVFFVFNPIFPDVRTVTELTSDTIITTICIYLLYGLFVGYSISFEYNELNSEKLARALGMHRE.

4 helical membrane passes run 29–49 (AATGFCGGVLWSFVAYIAYLF), 76–96 (VISIILIGVISIGAAFLYFLL), 105–125 (PGILYGLVLWLLVFFVFNPIF), and 139–159 (IITTICIYLLYGLFVGYSISF).

Its subcellular location is the cell membrane. This is an uncharacterized protein from Bacillus subtilis (strain 168).